The chain runs to 162 residues: NADH-quinone oxidoreductase subunit I (162 aa).

2 consecutive 4Fe-4S ferredoxin-type domains span residues 52–82 (LRRYPNGEERCIACKLCEAVCPAQAITIEAG) and 93–122 (VRYDIDMVKCIYCGLCQEACPVDAIVEGPN). 8 residues coordinate [4Fe-4S] cluster: cysteine 62, cysteine 65, cysteine 68, cysteine 72, cysteine 102, cysteine 105, cysteine 108, and cysteine 112.

It belongs to the complex I 23 kDa subunit family. NDH-1 is composed of 14 different subunits. Subunits NuoA, H, J, K, L, M, N constitute the membrane sector of the complex. [4Fe-4S] cluster serves as cofactor.

It localises to the cell inner membrane. It catalyses the reaction a quinone + NADH + 5 H(+)(in) = a quinol + NAD(+) + 4 H(+)(out). In terms of biological role, NDH-1 shuttles electrons from NADH, via FMN and iron-sulfur (Fe-S) centers, to quinones in the respiratory chain. The immediate electron acceptor for the enzyme in this species is believed to be ubiquinone. Couples the redox reaction to proton translocation (for every two electrons transferred, four hydrogen ions are translocated across the cytoplasmic membrane), and thus conserves the redox energy in a proton gradient. The sequence is that of NADH-quinone oxidoreductase subunit I from Bradyrhizobium sp. (strain BTAi1 / ATCC BAA-1182).